A 319-amino-acid chain; its full sequence is MKKSITTLDLNLLLCLQLLMQERSVTKAAKRINVTPSAVSKSLAKLRAWFDDPLFVNSPLGLSPTPLMVSMEQNLAEWMQMSNLLLDKPHHQTPRGLKFELAAESPLMMIMLNALSKQIYQRYPQATIKLRNWDYDSLDAITRGEVDIGFSGRESHPRSRELLSSLPLAIDYEVLFSDVPCVWLRKDHPALHQTWNLDTFLRYPHISICWEQSDTWALDNVLQELGRERTIAMSLPEFEQSLFMAAQPDNLLLATAPRYCQYYNQLHQLPLVALPLPFDESQQKKLEVPFTLLWHKRNSHNPKIVWLRETIKNLYASMA.

The 58-residue stretch at 8–65 (LDLNLLLCLQLLMQERSVTKAAKRINVTPSAVSKSLAKLRAWFDDPLFVNSPLGLSPT) folds into the HTH lysR-type domain. Residues 25–44 (VTKAAKRINVTPSAVSKSLA) constitute a DNA-binding region (H-T-H motif).

It belongs to the LysR transcriptional regulatory family.

In terms of biological role, involved in anaerobic NO protection. In Escherichia coli (strain K12 / MC4100 / BW2952), this protein is HTH-type transcriptional regulator YidZ.